Consider the following 1649-residue polypeptide: Formin-like protein 20 (1649 aa).

The 194-residue stretch at 1 to 194 (MALFRRFFYK…QYISRRNLGS (194 aa)) folds into the Phosphatase tensin-type domain. Cys-127 serves as the catalytic Phosphocysteine intermediate. One can recognise a C2 tensin-type domain in the interval 200–339 (DTPLLLDCLI…FKAEVLFSGA (140 aa)). Disordered stretches follow at residues 416 to 774 (DCAS…PWKS) and 787 to 1245 (STSQ…QKKS). The span at 421 to 483 (DSNHKHDMHA…RRTVEAKEND (63 aa)) shows a compositional bias: basic and acidic residues. Polar residues-rich tracts occupy residues 500-513 (LESMSQKTNTSLNK) and 585-597 (RINSAPASITTSL). Basic and acidic residues predominate over residues 598–616 (KDGKRATSPDGVIPKDAKT). Residues 648 to 662 (SLPPASPHQAPPPLP) show a composition bias toward pro residues. A compositionally biased stretch (polar residues) spans 665–678 (TSEAKTVLHSSQAV). Pro residues-rich tracts occupy residues 680–691 (SPPPPPPPPPLP), 701–711 (LPPPPPPPPPF), 722–732 (LPPPPPPPPPF), 743–752 (LPPPPPPPLP), and 795–804 (SPTPPPPPPA). Residues 809 to 820 (GQKSSDLQTSQL) are compositionally biased toward polar residues. Pro residues-rich tracts occupy residues 821 to 832 (PSPPPPPPPPPF), 843 to 854 (LPPPPPPPPPPF), and 865 to 874 (LPPPPPPPPW). Residues 878-890 (YASTFETHEACST) show a composition bias toward polar residues. Composition is skewed to pro residues over residues 893–904 (SPPPPPPPPPFS), 944–960 (PSPPVKTAPPPPPPPPF), and 968–1213 (SPPP…PPPM). In terms of domain architecture, FH2 spans 1237–1635 (FGSAAQKKSS…KALKEAEMEK (399 aa)).

It belongs to the formin-like family. Class-II subfamily.

The sequence is that of Formin-like protein 20 (FH20) from Arabidopsis thaliana (Mouse-ear cress).